We begin with the raw amino-acid sequence, 762 residues long: 1-phosphatidylinositol 4,5-bisphosphate phosphodiesterase delta-4 (762 aa).

The PH domain occupies 16–124 (LLMQEGMPMR…WMRGLQLLVD (109 aa)). The substrate binding stretch occupies residues 26–53 (KVRSKSWKKLRYFRLQNDGMTVWHARQA). 3 EF-hand domains span residues 134-169 (RLDQWLSDWFQRGDKNQDGKMSFQEVQRLLHLMNVE), 170-205 (MDQEYAFSLFQAADTSQSGTLEGEEFVQFYKALTKR), and 206-237 (AEVQELFESFSADGQKLTLLEFLDFLQEEQKE). Ca(2+)-binding residues include Asp-147, Asn-149, Asp-151, Lys-153, Glu-158, Asp-183, Ser-185, Ser-187, Thr-189, and Glu-194. The short motif at 213 to 243 (ESFSADGQKLTLLEFLDFLQEEQKERDCTSE) is the GBA element. The PI-PLC X-box domain occupies 290–435 (QDMTQPLNHY…LRRKILVKGK (146 aa)). The active site involves His-305. The Ca(2+) site is built by Asn-306, Glu-335, and Asp-337. The active site involves His-350. Glu-384 contacts Ca(2+). Substrate contacts are provided by Lys-433 and Lys-435. Over residues 443–471 (LEYEEEEAEPELEESELALESQFETEPEP) the composition is skewed to acidic residues. Residues 443-483 (LEYEEEEAEPELEESELALESQFETEPEPQEQNLQNKDKKK) are disordered. Ser-457 bears the Phosphoserine mark. In terms of domain architecture, PI-PLC Y-box spans 493–609 (LSSLVIYLKS…GYVLKPDFLR (117 aa)). Ser-522 and Arg-549 together coordinate substrate. The region spanning 609–736 (RDIQSSFHPE…QGYRHIHLLS (128 aa)) is the C2 domain. Ca(2+) is bound by residues Ile-650, Asp-652, Asn-676, Asp-705, Tyr-706, and Asp-707. A PDZ-binding motif is present at residues 731 to 734 (HIHL).

As to quaternary structure, interacts with GRIP1. Interacts (via GBA motif) with guanine nucleotide-binding protein G(i) alpha subunit GNAI3 (inactive GDP-bound form); high-affinity interaction. In terms of assembly, interacts (via GBA motif) with guanine nucleotide-binding protein G(i) alpha subunit GNAI3 (inactive GDP-bound form); low-affinity interaction. Requires Ca(2+) as cofactor. Highly expressed in skeletal muscle and kidney tissues, and at moderate level in intestinal tissue. Expressed in corneal epithelial cells.

It is found in the membrane. It localises to the nucleus. Its subcellular location is the cytoplasm. The protein localises to the endoplasmic reticulum. It carries out the reaction a 1,2-diacyl-sn-glycero-3-phospho-(1D-myo-inositol-4,5-bisphosphate) + H2O = 1D-myo-inositol 1,4,5-trisphosphate + a 1,2-diacyl-sn-glycerol + H(+). It catalyses the reaction a 1,2-diacyl-sn-glycero-3-phospho-(1D-myo-inositol) + H2O = 1D-myo-inositol 1-phosphate + a 1,2-diacyl-sn-glycerol + H(+). Its function is as follows. Hydrolyzes the phosphatidylinositol 4,5-bisphosphate (PIP2) to generate 2 second messenger molecules diacylglycerol (DAG) and inositol 1,4,5-trisphosphate (IP3). DAG mediates the activation of protein kinase C (PKC), while IP3 releases Ca(2+) from intracellular stores. Required for acrosome reaction in sperm during fertilization, probably by acting as an important enzyme for intracellular Ca(2+) mobilization in the zona pellucida-induced acrosome reaction. May play a role in cell growth. Modulates the liver regeneration in cooperation with nuclear PKC. Overexpression up-regulates the Erk signaling pathway and proliferation. In terms of biological role, acts as a non-receptor guanine nucleotide exchange factor which binds to and activates guanine nucleotide-binding protein (G-protein) alpha subunit GNAI3. This is 1-phosphatidylinositol 4,5-bisphosphate phosphodiesterase delta-4 from Homo sapiens (Human).